Here is a 165-residue protein sequence, read N- to C-terminus: SsrA-binding protein (165 aa).

Over residues 135–158 (QAHDKRQDMARRDAQREVTRELGR) the composition is skewed to basic and acidic residues. The segment at 135–165 (QAHDKRQDMARRDAQREVTRELGRRVKGMTN) is disordered.

Belongs to the SmpB family.

It localises to the cytoplasm. In terms of biological role, required for rescue of stalled ribosomes mediated by trans-translation. Binds to transfer-messenger RNA (tmRNA), required for stable association of tmRNA with ribosomes. tmRNA and SmpB together mimic tRNA shape, replacing the anticodon stem-loop with SmpB. tmRNA is encoded by the ssrA gene; the 2 termini fold to resemble tRNA(Ala) and it encodes a 'tag peptide', a short internal open reading frame. During trans-translation Ala-aminoacylated tmRNA acts like a tRNA, entering the A-site of stalled ribosomes, displacing the stalled mRNA. The ribosome then switches to translate the ORF on the tmRNA; the nascent peptide is terminated with the 'tag peptide' encoded by the tmRNA and targeted for degradation. The ribosome is freed to recommence translation, which seems to be the essential function of trans-translation. This is SsrA-binding protein from Mycolicibacterium gilvum (strain PYR-GCK) (Mycobacterium gilvum (strain PYR-GCK)).